Here is a 157-residue protein sequence, read N- to C-terminus: Transcription antitermination protein NusB (157 aa).

This sequence belongs to the NusB family.

In terms of biological role, involved in transcription antitermination. Required for transcription of ribosomal RNA (rRNA) genes. Binds specifically to the boxA antiterminator sequence of the ribosomal RNA (rrn) operons. The chain is Transcription antitermination protein NusB from Helicobacter hepaticus (strain ATCC 51449 / 3B1).